A 243-amino-acid polypeptide reads, in one-letter code: Protein IN2-1 (243 aa).

Positions 1–26 (MAAAAGPSSSVKESLPPALGSTSQPP) are disordered. Positions 31-112 (GTTRLYICYF…YIDSNFDGPA (82 aa)) constitute a GST N-terminal domain. Glutathione-binding positions include lysine 70, valine 84, and 96–97 (ES). The 132-residue stretch at 109 to 240 (DGPALLPEDA…FLLDLAKSHL (132 aa)) folds into the GST C-terminal domain.

The protein belongs to the GST superfamily. HSP26 family. In terms of tissue distribution, leaves and roots. It is more strongly induced in the leaves relative to the roots.

This chain is Protein IN2-1 (IN2-1), found in Zea mays (Maize).